We begin with the raw amino-acid sequence, 34 residues long: Mu-conotoxin GS (34 aa).

3 disulfides stabilise this stretch: cysteine 2–cysteine 14, cysteine 9–cysteine 19, and cysteine 13–cysteine 27. Residues proline 10 and proline 11 each carry the 4-hydroxyproline modification. Glutamate 32 carries the post-translational modification 4-carboxyglutamate.

As to expression, expressed by the venom duct.

Its subcellular location is the secreted. Its function is as follows. Mu-conotoxins block voltage-gated sodium channels (Nav). No effect was observed upon injections into mice and goldfish (25 ug). The protein is Mu-conotoxin GS of Conus geographus (Geography cone).